We begin with the raw amino-acid sequence, 356 residues long: Activating signal cointegrator 1 complex subunit 1 (356 aa).

The interval 1–52 (MDVLRPQIVTFDGRNYRKNPIQEKQYQHEEDEDFYPDSMEYSDEPCGAYEVA) is required for interaction with ASCC3. The 63-residue stretch at 57–119 (GFRATVSAPS…NGVVSARTRI (63 aa)) folds into the KH domain.

In terms of assembly, identified in the ASCC complex that contains ASCC1, ASCC2 and ASCC3. Interacts directly with ASCC3. The ASCC complex interacts with ALKBH3. Part of the ASC-1 complex, that contains TRIP4, ASCC1, ASCC2 and ASCC3. Interacts with CSRP1. Interacts with ZCCHC4. In terms of tissue distribution, expressed in the spinal cord, brain, paraspinal ganglia, thyroid, and submandibular glands.

The protein localises to the nucleus. Its subcellular location is the nucleus speckle. In terms of biological role, plays a role in DNA damage repair as component of the ASCC complex. Part of the ASC-1 complex that enhances NF-kappa-B, SRF and AP1 transactivation. In cells responding to gastrin-activated paracrine signals, it is involved in the induction of SERPINB2 expression by gastrin. May also play a role in the development of neuromuscular junction. This is Activating signal cointegrator 1 complex subunit 1 (Ascc1) from Mus musculus (Mouse).